We begin with the raw amino-acid sequence, 344 residues long: MTVVDIVKRTTSSPDDTALVKTLADAGYSTADVVALVAKTEGNGCVNDFSRTLADHTWDAVLPADAVTVFSGGTEGVLSPHASAFVGTDRPAAPEGALVAAVGRTASIPIADLGRAGQVRAVAARVRELCADAALEPGDVHLVLVKCPLLTTESISRCLADGVEPATRDTLRSMAMSRAASALGVAVALGEISEPDAAAALRGEADVWSSVASISSGAELDDCHILVLGNSPAAHGPLRAVHGVMRDAMDARTVLDLLDRVSADGGEVVQVLAKAEADPSGSIRGRRHTMLTDSDLSSTRHARAAVGGLLAGLVGDSAIYVSGGAEHQGPPGGGPVTVVYRVAS.

The segment at 1-91 (MTVVDIVKRT…ASAFVGTDRP (91 aa)) is RU A. Substrate-binding positions include R51 and 71-72 (SG). Positions 97–232 (ALVAAVGRTA…CHILVLGNSP (136 aa)) are RU B. K146 is an active-site residue. Residues R178 and 215-216 (SS) each bind substrate. Residue S215 is the Nucleophile of the active site. Residues 238-344 (LRAVHGVMRD…PVTVVYRVAS (107 aa)) form an RU C region. Position 276 (E276) interacts with Mg(2+). Substrate contacts are provided by residues R303 and 322–323 (SG). Positions 325, 328, 329, 330, and 333 each coordinate Mg(2+).

The protein belongs to the cyclic amide hydrolase (CyAH) family. In terms of assembly, homotetramer.

It carries out the reaction cyanurate + H2O = 1-carboxybiuret + H(+). The protein operates within xenobiotic degradation; atrazine degradation; biuret from cyanurate: step 1/1. Inhibited by barbituric acid. In terms of biological role, responsible for the hydrolysis of cyanuric acid, an intermediate formed during catabolism of s-triazine based compounds in herbicides such as atrazine and polymers such as melamine. Catalyzes the hydrolytic opening of the s-triazine ring of cyanuric acid (2,4,6-trihydroxy-s-triazine) to yield carbon dioxide and carboxybiuret, which spontaneously decarboxylates to biuret. This is Cyanuric acid amidohydrolase from Pseudonocardia dioxanivorans (strain ATCC 55486 / DSM 44775 / JCM 13855 / CB1190).